Reading from the N-terminus, the 241-residue chain is Pyridoxine 5'-phosphate synthase (241 aa).

Residue N7 participates in 3-amino-2-oxopropyl phosphate binding. Position 9 to 10 (9 to 10 (DH)) interacts with 1-deoxy-D-xylulose 5-phosphate. R18 contacts 3-amino-2-oxopropyl phosphate. H43 acts as the Proton acceptor in catalysis. R45 and H50 together coordinate 1-deoxy-D-xylulose 5-phosphate. Catalysis depends on E70, which acts as the Proton acceptor. A 1-deoxy-D-xylulose 5-phosphate-binding site is contributed by T100. H191 (proton donor) is an active-site residue. 3-amino-2-oxopropyl phosphate is bound by residues G192 and 213–214 (GH).

The protein belongs to the PNP synthase family. As to quaternary structure, homooctamer; tetramer of dimers.

The protein resides in the cytoplasm. It carries out the reaction 3-amino-2-oxopropyl phosphate + 1-deoxy-D-xylulose 5-phosphate = pyridoxine 5'-phosphate + phosphate + 2 H2O + H(+). The protein operates within cofactor biosynthesis; pyridoxine 5'-phosphate biosynthesis; pyridoxine 5'-phosphate from D-erythrose 4-phosphate: step 5/5. Functionally, catalyzes the complicated ring closure reaction between the two acyclic compounds 1-deoxy-D-xylulose-5-phosphate (DXP) and 3-amino-2-oxopropyl phosphate (1-amino-acetone-3-phosphate or AAP) to form pyridoxine 5'-phosphate (PNP) and inorganic phosphate. The sequence is that of Pyridoxine 5'-phosphate synthase from Nostoc punctiforme (strain ATCC 29133 / PCC 73102).